A 67-amino-acid chain; its full sequence is DNA gyrase inhibitor YacG (67 aa).

Residues Cys-10, Cys-13, Cys-29, and Cys-33 each contribute to the Zn(2+) site.

Belongs to the DNA gyrase inhibitor YacG family. Interacts with GyrB. Zn(2+) serves as cofactor.

In terms of biological role, inhibits all the catalytic activities of DNA gyrase by preventing its interaction with DNA. Acts by binding directly to the C-terminal domain of GyrB, which probably disrupts DNA binding by the gyrase. The polypeptide is DNA gyrase inhibitor YacG (Pasteurella multocida (strain Pm70)).